Here is a 772-residue protein sequence, read N- to C-terminus: Phosphoribosylformylglycinamidine synthase subunit PurL (772 aa).

H62 is a catalytic residue. Residues Y65 and K109 each coordinate ATP. Residue E111 coordinates Mg(2+). Substrate is bound by residues 112–115 (SHNH) and R134. The Proton acceptor role is filled by H113. A Mg(2+)-binding site is contributed by D135. Q259 contributes to the substrate binding site. A Mg(2+)-binding site is contributed by D287. 331 to 333 (ESQ) contacts substrate. ATP contacts are provided by D519 and G556. Residue N557 participates in Mg(2+) binding. Residue S559 coordinates substrate.

The protein belongs to the FGAMS family. As to quaternary structure, monomer. Part of the FGAM synthase complex composed of 1 PurL, 1 PurQ and 2 PurS subunits.

The protein localises to the cytoplasm. The enzyme catalyses N(2)-formyl-N(1)-(5-phospho-beta-D-ribosyl)glycinamide + L-glutamine + ATP + H2O = 2-formamido-N(1)-(5-O-phospho-beta-D-ribosyl)acetamidine + L-glutamate + ADP + phosphate + H(+). Its pathway is purine metabolism; IMP biosynthesis via de novo pathway; 5-amino-1-(5-phospho-D-ribosyl)imidazole from N(2)-formyl-N(1)-(5-phospho-D-ribosyl)glycinamide: step 1/2. Functionally, part of the phosphoribosylformylglycinamidine synthase complex involved in the purines biosynthetic pathway. Catalyzes the ATP-dependent conversion of formylglycinamide ribonucleotide (FGAR) and glutamine to yield formylglycinamidine ribonucleotide (FGAM) and glutamate. The FGAM synthase complex is composed of three subunits. PurQ produces an ammonia molecule by converting glutamine to glutamate. PurL transfers the ammonia molecule to FGAR to form FGAM in an ATP-dependent manner. PurS interacts with PurQ and PurL and is thought to assist in the transfer of the ammonia molecule from PurQ to PurL. The polypeptide is Phosphoribosylformylglycinamidine synthase subunit PurL (Leifsonia xyli subsp. xyli (strain CTCB07)).